Reading from the N-terminus, the 323-residue chain is Viral cathepsin (323 aa).

The signal sequence occupies residues 1 to 16; it reads MNKILFYLFVYGVVNS. Residues 17–112 constitute a propeptide, activation peptide; it reads AAYDLLKAPN…IVLDQPPGKG (96 aa). 3 disulfide bridges follow: Cys133/Cys174, Cys167/Cys207, and Cys262/Cys310. Cys136 is a catalytic residue. Asn158 carries N-linked (GlcNAc...) asparagine; by host glycosylation. Residues His269 and Asn289 contribute to the active site.

It belongs to the peptidase C1 family. As to quaternary structure, interacts with chitinase/CHIA; this interaction maintains VCATH in the host endoplasmic reticulum. In terms of processing, synthesized as an inactive proenzyme and activated by proteolytic removal of the inhibitory propeptide.

It is found in the host endoplasmic reticulum. The catalysed reaction is Endopeptidase of broad specificity, hydrolyzing substrates of both cathepsin L and cathepsin B.. In terms of biological role, cysteine protease that plays an essential role in host liquefaction to facilitate horizontal transmission of the virus. Accumulates within infected cells as an inactive proenzyme (proV-CATH), which is activated by proteolytic cleavage upon cell death. The chain is Viral cathepsin (VCATH) from Lepidoptera (butterflies and moths).